The following is a 338-amino-acid chain: Ferrochelatase (338 aa).

2 residues coordinate Fe cation: His-210 and Glu-291.

This sequence belongs to the ferrochelatase family.

The protein resides in the cytoplasm. It catalyses the reaction heme b + 2 H(+) = protoporphyrin IX + Fe(2+). Its pathway is porphyrin-containing compound metabolism; protoheme biosynthesis; protoheme from protoporphyrin-IX: step 1/1. Catalyzes the ferrous insertion into protoporphyrin IX. The chain is Ferrochelatase from Helicobacter acinonychis (strain Sheeba).